Consider the following 64-residue polypeptide: Large ribosomal subunit protein bL35 (64 aa).

Residues Met1–Lys64 form a disordered region.

Belongs to the bacterial ribosomal protein bL35 family.

The protein is Large ribosomal subunit protein bL35 of Beutenbergia cavernae (strain ATCC BAA-8 / DSM 12333 / CCUG 43141 / JCM 11478 / NBRC 16432 / NCIMB 13614 / HKI 0122).